A 339-amino-acid polypeptide reads, in one-letter code: Oncoprotein MEQ (339 aa).

The tract at residues 1–80 is disordered; that stretch reads MSQEPEPGAM…ARRRRRKQTD (80 aa). Ser-42 carries the post-translational modification Phosphoserine; by host CDK2. The interval 57–84 is basic motif; sequence KQKLERRRKRNRDAARRRRRKQTDYVDK. Positions 57–120 constitute a bZIP domain; that stretch reads KQKLERRRKR…TSLRVQLACH (64 aa). Over residues 60 to 77 the composition is skewed to basic residues; sequence LERRRKRNRDAARRRRRK. Positions 62–78 match the Nuclear localization signal motif; that stretch reads RRRKRNRDAARRRRRKQ. The interval 85-113 is leucine-zipper; the sequence is LHEACEELQRANEHLRKEIRDLRTECTSL. The tract at residues 120-339 is transactivation domain; sequence HEPVCPMAVP…VWWFPGDGRP (220 aa). The segment covering 145–160 has biased composition (pro residues); the sequence is PEPPICTPPPPSPDEP. The tract at residues 145–172 is disordered; sequence PEPPICTPPPPSPDEPNAPHCSGSQPPI.

The protein belongs to the bZIP family. Jun subfamily. As to quaternary structure, homodimer. Interacts with host JUN; this interaction allows MEQ to engage in host cell processes by disguising itself as a cellular JUN. Post-translationally, phosphorylated by host CDK2; this phosphorylation greatly reduces the DNA binding activity of MEQ.

It is found in the host nucleus. It localises to the host nucleolus. Functionally, functions as a DNA-binding transcription factor. Promotes transformation, host cell growth, host cell-cycle progression through G1/S phase, and possesses antiapoptotic activity. Forms functional heterodimers with host JUN. These heterodimers bind with high affinity DNA sequences called MEQ-responsive elements MERE I (TGACA/GTCA), while MEQ homodimers bind a second type of sites termed MERE II (ACACA). Both homo and heterodimerization of MEQ are required for oncogenesis. This is Oncoprotein MEQ (MDV005) from Gallid herpesvirus 2 (strain Chicken/Md5/ATCC VR-987) (GaHV-2).